The sequence spans 405 residues: Aspartokinase (405 aa).

Position 7 to 10 (7 to 10 (KYGG)) interacts with ATP. 25-30 (RIAHYR) is a substrate binding site. Serine 41 is a binding site for ATP. Residues 47–49 (TDE), glutamate 74, 125–126 (LD), 150–153 (RGGS), and serine 153 each bind substrate. ATP is bound by residues 173–174 (TD), 179–184 (YTTDPH), and arginine 209. ACT domains follow at residues 263–342 (IGLI…IAKV) and 344–405 (IVGV…LDKA). Residues aspartate 270, 274–275 (IA), 288–290 (AVD), glutamine 294, 355–356 (VP), 369–370 (NI), and 376–377 (SE) each bind substrate.

It belongs to the aspartokinase family. As to quaternary structure, heterotetramer consisting of 2 isoforms Alpha (catalytic and regulation) and of a homodimer of 2 isoforms Beta (regulation and thermostability).

It catalyses the reaction L-aspartate + ATP = 4-phospho-L-aspartate + ADP. Its pathway is amino-acid biosynthesis; L-lysine biosynthesis via DAP pathway; (S)-tetrahydrodipicolinate from L-aspartate: step 1/4. The protein operates within amino-acid biosynthesis; L-methionine biosynthesis via de novo pathway; L-homoserine from L-aspartate: step 1/3. It participates in amino-acid biosynthesis; L-threonine biosynthesis; L-threonine from L-aspartate: step 1/5. With respect to regulation, inhibited by threonine. Its function is as follows. Catalyzes the phosphorylation of the beta-carboxyl group of aspartic acid with ATP to yield 4-phospho-L-aspartate, which is involved in the branched biosynthetic pathway leading to the biosynthesis of amino acids threonine, isoleucine and methionine. The chain is Aspartokinase (ask) from Thermus thermophilus.